Here is a 123-residue protein sequence, read N- to C-terminus: Large ribosomal subunit protein uL18 (123 aa).

It belongs to the universal ribosomal protein uL18 family. As to quaternary structure, part of the 50S ribosomal subunit; part of the 5S rRNA/L5/L18/L25 subcomplex. Contacts the 5S and 23S rRNAs.

Functionally, this is one of the proteins that bind and probably mediate the attachment of the 5S RNA into the large ribosomal subunit, where it forms part of the central protuberance. This chain is Large ribosomal subunit protein uL18, found in Wolbachia sp. subsp. Brugia malayi (strain TRS).